The following is a 142-amino-acid chain: Transcriptional regulator MraZ (142 aa).

SpoVT-AbrB domains are found at residues 5–47 (EYQH…TINE) and 76–119 (ACIV…SREK).

The protein belongs to the MraZ family. As to quaternary structure, forms oligomers.

The protein resides in the cytoplasm. It localises to the nucleoid. This Clostridium botulinum (strain Eklund 17B / Type B) protein is Transcriptional regulator MraZ.